The following is a 171-amino-acid chain: S-ribosylhomocysteine lyase (171 aa).

Positions 54, 58, and 128 each coordinate Fe cation.

It belongs to the LuxS family. Homodimer. Fe cation is required as a cofactor.

The enzyme catalyses S-(5-deoxy-D-ribos-5-yl)-L-homocysteine = (S)-4,5-dihydroxypentane-2,3-dione + L-homocysteine. In terms of biological role, involved in the synthesis of autoinducer 2 (AI-2) which is secreted by bacteria and is used to communicate both the cell density and the metabolic potential of the environment. The regulation of gene expression in response to changes in cell density is called quorum sensing. Catalyzes the transformation of S-ribosylhomocysteine (RHC) to homocysteine (HC) and 4,5-dihydroxy-2,3-pentadione (DPD). The protein is S-ribosylhomocysteine lyase of Pectobacterium carotovorum subsp. carotovorum (strain PC1).